Reading from the N-terminus, the 234-residue chain is 2-C-methyl-D-erythritol 4-phosphate cytidylyltransferase (234 aa).

The protein belongs to the IspD/TarI cytidylyltransferase family. IspD subfamily.

The catalysed reaction is 2-C-methyl-D-erythritol 4-phosphate + CTP + H(+) = 4-CDP-2-C-methyl-D-erythritol + diphosphate. It participates in isoprenoid biosynthesis; isopentenyl diphosphate biosynthesis via DXP pathway; isopentenyl diphosphate from 1-deoxy-D-xylulose 5-phosphate: step 2/6. Its function is as follows. Catalyzes the formation of 4-diphosphocytidyl-2-C-methyl-D-erythritol from CTP and 2-C-methyl-D-erythritol 4-phosphate (MEP). The sequence is that of 2-C-methyl-D-erythritol 4-phosphate cytidylyltransferase from Pseudomonas aeruginosa (strain UCBPP-PA14).